The primary structure comprises 866 residues: Probable outer membrane usher protein ElfC (866 aa).

A signal peptide spans 1–35 (MYRTHRQHSLLSSGGVPSFIGGLVVFVSAAFNAQA).

Belongs to the fimbrial export usher family.

It is found in the cell outer membrane. Functionally, part of the elfADCG-ycbUVF fimbrial operon, which promotes adhesion of bacteria to different abiotic surfaces. Could be involved in the export and assembly of the ElfA fimbrial subunits across the outer membrane. The polypeptide is Probable outer membrane usher protein ElfC (elfC) (Escherichia coli (strain K12)).